A 309-amino-acid polypeptide reads, in one-letter code: Phosphoserine phosphatase (309 aa).

The Nucleophile role is filled by aspartate 97. Mg(2+)-binding residues include aspartate 97 and aspartate 99. The active-site Proton donor is the aspartate 99. Substrate is bound by residues glutamate 106, arginine 142, 186-187 (SG), and lysine 232. A Mg(2+)-binding site is contributed by aspartate 255. Residue asparagine 258 coordinates substrate.

The protein belongs to the HAD-like hydrolase superfamily. SerB family. Requires Mg(2+) as cofactor.

It carries out the reaction O-phospho-L-serine + H2O = L-serine + phosphate. The catalysed reaction is O-phospho-D-serine + H2O = D-serine + phosphate. It participates in amino-acid biosynthesis; L-serine biosynthesis; L-serine from 3-phospho-D-glycerate: step 3/3. This is Phosphoserine phosphatase (SER2) from Saccharomyces cerevisiae (strain ATCC 204508 / S288c) (Baker's yeast).